The sequence spans 1235 residues: JNK-interacting protein 3 (1235 aa).

Residues 1 to 22 are disordered; sequence MMDNDDALLNNGGPQSGAETVY. The region spanning 25 to 113 is the RH1 domain; the sequence is EDNNMVMSEK…VTQYEREKSA (89 aa). A coiled-coil region spans residues 84 to 184; the sequence is RINQEQDVEL…NKLHERYTEL (101 aa). A disordered region spans residues 278 to 325; it reads GAATDSLQQQHQATSPQSPPDTSPVVPNVPPANVGRSTTKKEQRSDNN. A compositionally biased stretch (polar residues) spans 282–293; sequence DSLQQQHQATSP. Residues 294–307 are compositionally biased toward pro residues; it reads QSPPDTSPVVPNVP. The stretch at 366–493 forms a coiled coil; sequence GKEVENLIME…AVRLTEILRA (128 aa). One can recognise an RH2 domain in the interval 456-526; that stretch reads RKRFTRVEMA…TPSNRPTERI (71 aa). Disordered regions lie at residues 520–572, 813–852, and 869–897; these read NRPT…MHPA, KPKSEDEQNSNSKPQQQQQDEEEAKEATEKSNEPLPPVNA, and PGAPQRLSSGNSGSDGNQANNNNSSSTGS. The span at 529 to 543 shows a compositional bias: gly residues; sequence GLGGGPMFRNTGGGS. 2 stretches are compositionally biased toward low complexity: residues 544–555 and 821–830; these read PAHSHGSPSRGS and NSNSKPQQQQ. The span at 874–897 shows a compositional bias: polar residues; that stretch reads RLSSGNSGSDGNQANNNNSSSTGS.

This sequence belongs to the JIP scaffold family. Forms homo- and heterooligomeric complexes. Binds the TPR motif-containing C-terminal of kinesin light chain, Klc. Pre-assembled syd scaffolding complexes are then transported as a cargo of kinesin, to the required subcellular location.

The protein localises to the cytoplasm. In terms of biological role, the JNK-interacting protein (JIP) group of scaffold proteins selectively mediates JNK-signaling by aggregating specific components of the MAPK cascade to form a functional JNK signaling module. May function as a regulator of vesicle transport, through interactions with the JNK-signaling components and motor proteins. Syd is required for efficient kinesin-I mediated axonal transport. In Drosophila pseudoobscura pseudoobscura (Fruit fly), this protein is JNK-interacting protein 3.